The primary structure comprises 83 residues: Large ribosomal subunit protein eL31 (83 aa).

This sequence belongs to the eukaryotic ribosomal protein eL31 family.

This is Large ribosomal subunit protein eL31 from Methanococcus vannielii (strain ATCC 35089 / DSM 1224 / JCM 13029 / OCM 148 / SB).